Reading from the N-terminus, the 181-residue chain is Protein Syd (181 aa).

Belongs to the Syd family.

Its subcellular location is the cell inner membrane. Functionally, interacts with the SecY protein in vivo. May bind preferentially to an uncomplexed state of SecY, thus functioning either as a chelating agent for excess SecY in the cell or as a regulatory factor that negatively controls the translocase function. This chain is Protein Syd, found in Shigella flexneri serotype 5b (strain 8401).